The following is a 492-amino-acid chain: NADH-quinone oxidoreductase subunit N 2 (492 aa).

Helical transmembrane passes span 16-36 (ILPEIVLAVFGIVVMMADALI), 44-64 (PLGYLSLIGVLVSLGAIACQA), 87-107 (FSLFFHVLIALITAAVLLVSF), 118-138 (GEYYAIILFSALGMMLMTSAT), 140-160 (LVLIFIALEISSIGSYVLAAM), 175-195 (FLLGSFATAFFLYGVALIFGA), 216-236 (PIIYLAVALMFIGLGFKVAAA), 250-270 (PSPIVALMSTGPKAAAFAVLL), 282-302 (FWIVWVSAALSMTIGNIGALV), 309-329 (LLAYSSIAHAGYMLVAFAAAK), 333-353 (ISAAIFYTATYAAMNVGAFAV), 381-401 (AAILTVFLLSLIGIPVTGGFF), 416-438 (VWLTIIGVINSAVGAYYYLRIIV), and 455-475 (PFGLALALAMCLMFTIYLGVL).

The protein belongs to the complex I subunit 2 family. NDH-1 is composed of 14 different subunits. Subunits NuoA, H, J, K, L, M, N constitute the membrane sector of the complex.

The protein resides in the cell inner membrane. It catalyses the reaction a quinone + NADH + 5 H(+)(in) = a quinol + NAD(+) + 4 H(+)(out). In terms of biological role, NDH-1 shuttles electrons from NADH, via FMN and iron-sulfur (Fe-S) centers, to quinones in the respiratory chain. The immediate electron acceptor for the enzyme in this species is believed to be ubiquinone. Couples the redox reaction to proton translocation (for every two electrons transferred, four hydrogen ions are translocated across the cytoplasmic membrane), and thus conserves the redox energy in a proton gradient. The protein is NADH-quinone oxidoreductase subunit N 2 of Koribacter versatilis (strain Ellin345).